We begin with the raw amino-acid sequence, 356 residues long: Fructose-bisphosphate aldolase 1, chloroplastic (356 aa).

A chloroplast-targeting transit peptide spans G1–A6. Substrate-binding residues include R53 and K143. E183 serves as the catalytic Proton acceptor. Residue K225 is the Schiff-base intermediate with dihydroxyacetone-P of the active site.

This sequence belongs to the class I fructose-bisphosphate aldolase family.

Its subcellular location is the plastid. It is found in the chloroplast. The enzyme catalyses beta-D-fructose 1,6-bisphosphate = D-glyceraldehyde 3-phosphate + dihydroxyacetone phosphate. The protein operates within carbohydrate degradation; glycolysis; D-glyceraldehyde 3-phosphate and glycerone phosphate from D-glucose: step 4/4. The sequence is that of Fructose-bisphosphate aldolase 1, chloroplastic from Pisum sativum (Garden pea).